A 103-amino-acid chain; its full sequence is MHLQLQYCLILAAALFCIGIYGLITSRNAVRVLMSIELLLNAVNLNLMGFSNYLDPSNIRGQVFAIFVITIAAAEAAVGLAIVLAIYRNRETTDMEQFNLLKW.

The next 3 membrane-spanning stretches (helical) occupy residues Leu5–Thr25, Val32–Asn52, and Ile66–Ile86.

This sequence belongs to the complex I subunit 4L family. As to quaternary structure, NDH-1 can be composed of about 15 different subunits; different subcomplexes with different compositions have been identified which probably have different functions.

It is found in the cellular thylakoid membrane. It carries out the reaction a plastoquinone + NADH + (n+1) H(+)(in) = a plastoquinol + NAD(+) + n H(+)(out). The enzyme catalyses a plastoquinone + NADPH + (n+1) H(+)(in) = a plastoquinol + NADP(+) + n H(+)(out). NDH-1 shuttles electrons from an unknown electron donor, via FMN and iron-sulfur (Fe-S) centers, to quinones in the respiratory and/or the photosynthetic chain. The immediate electron acceptor for the enzyme in this species is believed to be plastoquinone. Couples the redox reaction to proton translocation, and thus conserves the redox energy in a proton gradient. Cyanobacterial NDH-1 also plays a role in inorganic carbon-concentration. This chain is NAD(P)H-quinone oxidoreductase subunit 4L, found in Synechocystis sp. (strain ATCC 27184 / PCC 6803 / Kazusa).